Here is a 711-residue protein sequence, read N- to C-terminus: Nucleolin (711 aa).

The segment at 1–304 (MVKLAKAGKN…KKQKVEGTEP (304 aa)) is disordered. N6-acetyllysine occurs at positions 9, 15, and 16. The span at 24 to 43 (VEEDSEDEEMSEDEEDDSSG) shows a compositional bias: acidic residues. Phosphoserine occurs at positions 28, 34, 41, and 42. Low complexity predominate over residues 56–107 (AAATSAKKVVVSPTKKVAVATPAKKAAVTPGKKAAATPAKKTVTPAKAVATP). Copy 1 of the repeat occupies 58–65 (ATSAKKVV). The segment at 58–135 (ATSAKKVVVS…GAAIPAKGAK (78 aa)) is 8 X 8 AA tandem repeats of X-T-P-X-K-K-X-X. A Phosphoserine modification is found at S67. Residues T69, T76, T84, and T92 each carry the phosphothreonine modification. 3 repeat units span residues 75–82 (ATPAKKAA), 83–90 (VTPGKKAA), and 91–98 (ATPAKKTV). K96 carries the post-translational modification N6-acetyllysine. T99 carries the post-translational modification Phosphothreonine. A 5; truncated repeat occupies 99-104 (TPAKAV). At K102 the chain carries N6-acetyllysine. Copy 6 of the repeat occupies 105-112 (ATPGKKGA). T106 carries the post-translational modification Phosphothreonine. K109 bears the N6-acetyllysine mark. T113 bears the Phosphothreonine mark. K116 is modified (N6-acetyllysine). Repeat copies occupy residues 120-127 (ATPGKKGA) and 128-135 (AIPAKGAK). T121 is modified (phosphothreonine). Residues 122 to 137 (PGKKGAAIPAKGAKNG) show a composition bias toward low complexity. At K124 the chain carries N6-acetyllysine. S145, S153, S184, and S207 each carry phosphoserine. 2 stretches are compositionally biased toward acidic residues: residues 145-171 (SDEE…DEIE) and 184-212 (SEDE…EEAM). A Phosphothreonine modification is found at T215. A compositionally biased stretch (acidic residues) spans 235–273 (EDEDEEEDDEDEDDDDDEDDEDEDDDDEDEEEEEEEEEP). The span at 274-301 (VKEAPGKRKKEMAKQKAAPEAKKQKVEG) shows a compositional bias: basic and acidic residues. Residue K298 forms a Glycyl lysine isopeptide (Lys-Gly) (interchain with G-Cter in SUMO1); alternate linkage. K298 is covalently cross-linked (Glycyl lysine isopeptide (Lys-Gly) (interchain with G-Cter in SUMO2); alternate). T302 carries the post-translational modification Phosphothreonine. RRM domains lie at 308–384 (FNLF…KPKG) and 394–467 (RTLL…YTGE). An N6-acetyllysine modification is found at K319. K325 is covalently cross-linked (Glycyl lysine isopeptide (Lys-Gly) (interchain with G-Cter in SUMO1); alternate). K325 is covalently cross-linked (Glycyl lysine isopeptide (Lys-Gly) (interchain with G-Cter in SUMO2); alternate). An N6-acetyllysine modification is found at K349. Position 357 is a phosphoserine (S357). Position 368 is a phosphothreonine (T368). Residue K371 forms a Glycyl lysine isopeptide (Lys-Gly) (interchain with G-Cter in SUMO2) linkage. A Glycyl lysine isopeptide (Lys-Gly) (interchain with G-Cter in SUMO2); alternate cross-link involves residue K378. The residue at position 378 (K378) is an N6-acetyllysine; alternate. K399 and K404 each carry N6-acetyllysine. T406 bears the Phosphothreonine mark. An N6-acetyllysine mark is found at K428 and K445. Phosphoserine occurs at positions 459 and 461. An N6-acetyllysine mark is found at K468 and K478. The RRM 3 domain maps to 487 to 561 (KTLVLSNLSY…RAIRLELQGP (75 aa)). K514 participates in a covalent cross-link: Glycyl lysine isopeptide (Lys-Gly) (interchain with G-Cter in SUMO2); alternate. K514 is modified (N6-acetyllysine; alternate). K522 carries the post-translational modification N6-acetyllysine. At S564 the chain carries Phosphoserine. K573 carries the post-translational modification N6-acetyllysine. The RRM 4 domain maps to 573-648 (KTLFVKGLSE…NKVTLDWAKP (76 aa)). A Glycyl lysine isopeptide (Lys-Gly) (interchain with G-Cter in SUMO2); alternate cross-link involves residue K578. K578 carries the N6-acetyllysine; alternate modification. S581 carries the post-translational modification Phosphoserine. K590 is covalently cross-linked (Glycyl lysine isopeptide (Lys-Gly) (interchain with G-Cter in SUMO1); alternate). A Glycyl lysine isopeptide (Lys-Gly) (interchain with G-Cter in SUMO2); alternate cross-link involves residue K590. S592 and S620 each carry phosphoserine. A Glycyl lysine isopeptide (Lys-Gly) (interchain with G-Cter in SUMO2) cross-link involves residue K625. The segment at 641-711 (VTLDWAKPKG…KPQGKKTKFE (71 aa)) is disordered. K647 is subject to N6-acetyllysine. The span at 651-697 (EGGFGGRGGGRGGFGGRGGGRGGRGGFGGRGRGGFGGRGGFRGGRGG) shows a compositional bias: gly residues. 9 positions are modified to asymmetric dimethylarginine: R657, R661, R667, R671, R674, R680, R682, R688, and R692. R695 is subject to Asymmetric dimethylarginine; alternate. An Omega-N-methylarginine; alternate modification is found at R695. Residues 698–711 (GGDHKPQGKKTKFE) are compositionally biased toward basic and acidic residues.

In terms of assembly, identified in a IGF2BP1-dependent mRNP granule complex containing untranslated mRNAs. Component of the SWAP complex that consists of NPM1, NCL/nucleolin, PARP1 and SWAP70. Component of a complex which is at least composed of HTATSF1/Tat-SF1, the P-TEFb complex components CDK9 and CCNT1, RNA polymerase II, SUPT5H, and NCL/nucleolin. Interacts with AICDA. Interacts with APTX. Interacts with C1QBP. Interacts with ERBB4. Interacts (via C-terminus) with FMR1 isoform 6 (via N-terminus). Interacts with GZF1; this interaction is important for nucleolar localization of GZF1. Interacts with NSUN2. Interacts with NVL. Interacts (via N-terminus domain) with SETX. Interacts (via RRM1 and C-terminal RRM4/Arg/Gly-rich domains) with TERT; the interaction is important for nucleolar localization of TERT. Interacts with WDR46. Interacts with ZFP36. Interacts with LRRC34. Interacts with RRP1B. Interacts with HNRNPU; this interaction occurs during mitosis. Interacts with RIOK1; RIOK1 recruits NCL to PRMT5 for symmetrically methylation. Interacts with ZBTB7B. Interacts with MDK; this interaction promotes NCL clustering and lateral movements of this complex into lipid rafts leading to MDK internalization. Interacts with HDGF. Interacts with ALKBH2. Interacts with IGFBP5; this interaction is necessary for IGFBP5 localization to the nucleus. Post-translationally, some glutamate residues are glycylated by TTLL8. This modification occurs exclusively on glutamate residues and results in a glycine chain on the gamma-carboxyl group. Symmetrically methylated by PRMT5.

It localises to the nucleus. Its subcellular location is the nucleolus. The protein localises to the cytoplasm. Nucleolin is the major nucleolar protein of growing eukaryotic cells. It is found associated with intranucleolar chromatin and pre-ribosomal particles. It induces chromatin decondensation by binding to histone H1. It is thought to play a role in pre-rRNA transcription and ribosome assembly. May play a role in the process of transcriptional elongation. Binds RNA oligonucleotides with 5'-UUAGGG-3' repeats more tightly than the telomeric single-stranded DNA 5'-TTAGGG-3' repeats. The protein is Nucleolin (NCL) of Macaca fascicularis (Crab-eating macaque).